A 94-amino-acid chain; its full sequence is Protein FAM24B (94 aa).

An N-terminal signal peptide occupies residues 1-21; that stretch reads MPVIAGGILAALLLLIVVVLC.

This sequence belongs to the FAM24 family.

It localises to the secreted. This Homo sapiens (Human) protein is Protein FAM24B (FAM24B).